We begin with the raw amino-acid sequence, 151 residues long: Ribonuclease H (151 aa).

Residues 5-146 (ALPHVTIFTD…ADQLAREGVA (142 aa)) enclose the RNase H type-1 domain. Residues Asp-14, Glu-52, Asp-74, and Asp-138 each coordinate Mg(2+).

This sequence belongs to the RNase H family. As to quaternary structure, monomer. Mg(2+) is required as a cofactor.

Its subcellular location is the cytoplasm. It catalyses the reaction Endonucleolytic cleavage to 5'-phosphomonoester.. Its function is as follows. Endonuclease that specifically degrades the RNA of RNA-DNA hybrids. The chain is Ribonuclease H from Nitrobacter hamburgensis (strain DSM 10229 / NCIMB 13809 / X14).